The following is a 503-amino-acid chain: Autophagy-related protein 32 (503 aa).

Disordered regions lie at residues 98-138 (AAGI…KSLE), 151-186 (LPEDSNNINNNNKNGSTTGSNGEEDDNDTITKSLNS), and 328-370 (DNSD…HKKR). The span at 116–126 (NSPSAVHQQLH) shows a compositional bias: polar residues. Residues 155-171 (SNNINNNNKNGSTTGSN) are compositionally biased toward low complexity. The span at 342 to 354 (KRLKRSLQRKKKK) shows a compositional bias: basic residues. Residues 355-364 (FIETSAERNG) are compositionally biased toward basic and acidic residues. Residues 380–396 (VLWGVSLTLGVGVGYCI) form a helical membrane-spanning segment.

It belongs to the ATG32 family.

The protein localises to the mitochondrion outer membrane. It is found in the vacuole membrane. It localises to the preautophagosomal structure membrane. Its function is as follows. Mitophagy-specific receptor that recruits the autophagic machinery to mitochondria and regulates selective degradation of mitochondria. Mitophagy contributes to regulate mitochondrial quantity and quality by eliminating the mitochondria to a basal level to fulfill cellular energy requirements and preventing excess ROS production. Recruits ATG11 to the surface of mitochondria. Also promotes autophagy-dependent peroxisome degradation. The protein is Autophagy-related protein 32 (ATG32) of Zygosaccharomyces rouxii (strain ATCC 2623 / CBS 732 / NBRC 1130 / NCYC 568 / NRRL Y-229).